Consider the following 232-residue polypeptide: Phosphatidylserine decarboxylase proenzyme (232 aa).

Ser-190 functions as the Schiff-base intermediate with substrate; via pyruvic acid in the catalytic mechanism. At Ser-190 the chain carries Pyruvic acid (Ser); by autocatalysis.

It belongs to the phosphatidylserine decarboxylase family. PSD-A subfamily. In terms of assembly, heterodimer of a large membrane-associated beta subunit and a small pyruvoyl-containing alpha subunit. The cofactor is pyruvate. Is synthesized initially as an inactive proenzyme. Formation of the active enzyme involves a self-maturation process in which the active site pyruvoyl group is generated from an internal serine residue via an autocatalytic post-translational modification. Two non-identical subunits are generated from the proenzyme in this reaction, and the pyruvate is formed at the N-terminus of the alpha chain, which is derived from the carboxyl end of the proenzyme. The post-translation cleavage follows an unusual pathway, termed non-hydrolytic serinolysis, in which the side chain hydroxyl group of the serine supplies its oxygen atom to form the C-terminus of the beta chain, while the remainder of the serine residue undergoes an oxidative deamination to produce ammonia and the pyruvoyl prosthetic group on the alpha chain.

Its subcellular location is the cell membrane. The catalysed reaction is a 1,2-diacyl-sn-glycero-3-phospho-L-serine + H(+) = a 1,2-diacyl-sn-glycero-3-phosphoethanolamine + CO2. It participates in phospholipid metabolism; phosphatidylethanolamine biosynthesis; phosphatidylethanolamine from CDP-diacylglycerol: step 2/2. Its function is as follows. Catalyzes the formation of phosphatidylethanolamine (PtdEtn) from phosphatidylserine (PtdSer). This is Phosphatidylserine decarboxylase proenzyme from Beijerinckia indica subsp. indica (strain ATCC 9039 / DSM 1715 / NCIMB 8712).